The sequence spans 108 residues: Large ribosomal subunit protein uL24 (108 aa).

The protein belongs to the universal ribosomal protein uL24 family. As to quaternary structure, part of the 50S ribosomal subunit.

One of two assembly initiator proteins, it binds directly to the 5'-end of the 23S rRNA, where it nucleates assembly of the 50S subunit. Functionally, one of the proteins that surrounds the polypeptide exit tunnel on the outside of the subunit. The protein is Large ribosomal subunit protein uL24 of Frankia casuarinae (strain DSM 45818 / CECT 9043 / HFP020203 / CcI3).